A 467-amino-acid polypeptide reads, in one-letter code: UDP-glycosyltransferase 90A2 (467 aa).

Residues serine 289, 341–343 (VDQ), 358–366 (HCGWNSLTE), and 380–383 (AAEQ) contribute to the UDP-alpha-D-glucose site.

It belongs to the UDP-glycosyltransferase family.

The chain is UDP-glycosyltransferase 90A2 (UGT90A2) from Arabidopsis thaliana (Mouse-ear cress).